The chain runs to 500 residues: MNFFPWLTIIVVLPIFAGSVIFFLPHRGNRVIRWYTICICILELLLTTYAFCYHFQFDDPLIQLVEDYKWINFFAFHWRLGIDGLSIGPILLTGFITTLATLAARPVTRDSRLFHFLMLAMYSGQIGSFSSRDLLLFFIMWEFELIPVYLLLSIWGGKRRLYSATNFILYTAGGSIFLLMGVLGVGLYGSNEPTLNFETSVNQSYPVALEIIFYIGFFIAFAVKSPIIPLHTWLPDTHGEAHYSTCMLLAGILLKMGAYGLIRINMELLPHAHSIFSPWLVIVGTIQIIYAASTSPGQRNLKKRIAYSSVSHMGFILIGIGSITDTGLNGAILQIISHGFIGAALFFLAGTSYDRIRLVYLDEMGGIAIPMPKIFTMFTSFSMASLALPGMSGFVAELIVFFGIITSQKYLLMPKILITFVMAIGMILTPIYSLSMLRQMFYGYKLFNAPNSYVFDSGPRELFVSISIFLPVIGIGMYPDFVLSLSVDKVEVILSNFFYR.

Transmembrane regions (helical) follow at residues 3–23 (FFPWLTIIVVLPIFAGSVIFF), 37–57 (ICICILELLLTTYAFCYHFQF), 84–104 (GLSIGPILLTGFITTLATLAA), 111–129 (SRLFHFLMLAMYSGQIGSF), 134–154 (LLLFFIMWEFELIPVYLLLSI), 167–187 (FILYTAGGSIFLLMGVLGVGL), 208–228 (ALEIIFYIGFFIAFAVKSPII), 242–262 (HYSTCMLLAGILLKMGAYGLI), 272–292 (AHSIFSPWLVIVGTIQIIYAA), 305–325 (IAYSSVSHMGFILIGIGSITD), 330–350 (GAILQIISHGFIGAALFFLAG), 386–406 (LALPGMSGFVAELIVFFGIIT), 416–436 (ILITFVMAIGMILTPIYSLSM), and 462–482 (LFVSISIFLPVIGIGMYPDFV).

Belongs to the complex I subunit 4 family.

The protein localises to the plastid. Its subcellular location is the chloroplast thylakoid membrane. The catalysed reaction is a plastoquinone + NADH + (n+1) H(+)(in) = a plastoquinol + NAD(+) + n H(+)(out). It carries out the reaction a plastoquinone + NADPH + (n+1) H(+)(in) = a plastoquinol + NADP(+) + n H(+)(out). The polypeptide is NAD(P)H-quinone oxidoreductase chain 4, chloroplastic (Panax ginseng (Korean ginseng)).